We begin with the raw amino-acid sequence, 367 residues long: Choline-phosphate cytidylyltransferase A (367 aa).

Met-1 is modified (N-acetylmethionine). Positions 1–31 are disordered; the sequence is MDAQSSAKVNSRKRRKEVPGPNGATEEDGIP. Lys-8 is modified (N6-acetyllysine). Residues Ile-84, Phe-85, His-92, and Lys-122 each contribute to the CTP site. Residues Lys-122 and Trp-151 each coordinate phosphocholine. Residues His-168, Asp-169, Tyr-173, Gln-195, Arg-196, Thr-197, and Ile-200 each contribute to the CTP site. 2 amphipathic regions span residues 228 to 287 and 298 to 315; these read KELN…EFIG and ALKH…QAIS. Position 233 is a phosphoserine (Ser-233). The tract at residues 272–293 is autoinhibitory (AI); the sequence is IDLIQKWEEKSREFIGSFLEMF. Positions 313–367 are disordered; sequence AISPKQSPSSSPTHERSPSPSFRWPFSGKTSPSSSPASLSRCKAVTCDISEDEED. Position 315 is a phosphoserine; by PKC (Ser-315). A compositionally biased stretch (polar residues) spans 315–324; that stretch reads SPKQSPSSSP. Ser-319, Ser-321, Ser-322, and Ser-323 each carry phosphoserine. Repeat unit 1 spans residues 319-324; it reads SPSSSP. The 3 X repeats stretch occupies residues 319–348; it reads SPSSSPTHERSPSPSFRWPFSGKTSPSSSP. At Thr-325 the chain carries Phosphothreonine. Residues Ser-329 and Ser-331 each carry the phosphoserine modification. The stretch at 329–333 is one 2; approximate repeat; sequence SPSPS. A compositionally biased stretch (low complexity) spans 330–352; the sequence is PSPSFRWPFSGKTSPSSSPASLS. At Ser-333 the chain carries Phosphoserine; by PKC. Residue Thr-342 is modified to Phosphothreonine. Phosphoserine is present on residues Ser-343, Ser-345, Ser-346, Ser-347, Ser-350, and Ser-352. Repeat unit 3 spans residues 343–348; the sequence is SPSSSP. Thr-358 carries the phosphothreonine modification. Position 362 is a phosphoserine; by CK2 (Ser-362).

It belongs to the cytidylyltransferase family. In terms of assembly, homodimer. The serine residues of the C-terminus are phosphorylated. The inactive soluble form is stabilized by phosphorylation, the active membrane bound form is promoted by anionic lipids or diacylglycerol, and is stabilized by dephosphorylation. Post-translationally, the N-terminus is blocked. In terms of processing, monoubiquitinated by the SCF(FBXL2) complex, leading to proteasomal degradation.

It is found in the cytoplasm. The protein localises to the cytosol. It localises to the membrane. Its subcellular location is the endoplasmic reticulum membrane. The protein resides in the nucleus. The catalysed reaction is phosphocholine + CTP + H(+) = CDP-choline + diphosphate. Its pathway is phospholipid metabolism; phosphatidylcholine biosynthesis; phosphatidylcholine from phosphocholine: step 1/2. Its activity is regulated as follows. Interconverts between an inactive cytosolic form and an active membrane-bound form. Activation involves disruption of an inhibitory interaction between helices at the base of the active site and the autoinhibitory (AI) region. Activated by N-methylethanolamine. Activated by oleic acid-containing phosphatidylcholine vesicles. Catalyzes the key rate-limiting step in the CDP-choline pathway for phosphatidylcholine biosynthesis. The chain is Choline-phosphate cytidylyltransferase A (Pcyt1a) from Rattus norvegicus (Rat).